The chain runs to 215 residues: Beta-crystallin A3 (215 aa).

N-acetylmethionine is present on M1. Residues 1–16 are compositionally biased toward low complexity; the sequence is METQAEQQELETLPTT. A disordered region spans residues 1–29; sequence METQAEQQELETLPTTKMAQTNPTPGSLG. The segment at 1–30 is N-terminal arm; the sequence is METQAEQQELETLPTTKMAQTNPTPGSLGP. E2 is subject to N-acetylalanine. 2 consecutive Beta/gamma crystallin 'Greek key' domains span residues 31-70 and 71-117; these read WKIT…KVES and GAWI…RPIC. S-glutathionyl cysteine; alternate occurs at positions 82 and 117. S-methylcysteine; alternate occurs at positions 82 and 117. Residues 118-123 are connecting peptide; that stretch reads SANHKE. Beta/gamma crystallin 'Greek key' domains lie at 124–165 and 166–214; these read SKMT…KIQS and GAWV…RRIQ. C185 carries the post-translational modification S-methylcysteine.

Belongs to the beta/gamma-crystallin family. In terms of assembly, homo/heterodimer, or complexes of higher-order. The structure of beta-crystallin oligomers seems to be stabilized through interactions between the N-terminal arms. Interacts with CRYBA1. Specific cleavages in the N-terminal arm occur during lens maturation and give rise to several truncated forms. Cleavages do not seem to have adverse effects on solubility. In terms of processing, S-methylation and glutathionylation occur in normal young lenses and do not seem to be detrimental.

Its function is as follows. Crystallins are the dominant structural components of the vertebrate eye lens. The chain is Beta-crystallin A3 from Homo sapiens (Human).